The chain runs to 299 residues: MFQFGKKITGAHEDGIWCVKWQGDIIATGGMGTKVKTWHGNQPQFLTERKVFDKHILGVTSLDIDIGARYLATGGMDGTVRLFDLSTNTLHKTIDSGPLGCLKIGFLNSANNLVSVSESGNISIYSVETGEKLRSISNTNKQVLTMAISPNNEQIAVAGLDGTVLCYDVESGRRVSEIKAHGVPIRSLCFSSDSKTIFTGAEDSQIRLHDPNSSNPYIASLLGHSSFIFSLVASSNGDLLASSGSIDRKVCIWDIKTRKLDSSFTAHADQTWDLAFSPDSTKLVSVSDDCSIHSYALKQ.

7 WD repeats span residues 11–48 (AHEDGIWCVKWQGDIIATGGMGTKVKTWHGNQPQFLTE), 54–93 (KHILGVTSLDIDIGARYLATGGMDGTVRLFDLSTNTLHKT), 96–135 (SGPLGCLKIGFLNSANNLVSVSESGNISIYSVETGEKLRS), 138–177 (NTNKQVLTMAISPNNEQIAVAGLDGTVLCYDVESGRRVSE), 180–219 (AHGVPIRSLCFSSDSKTIFTGAEDSQIRLHDPNSSNPYIA), 223–263 (GHSS…LDSS), and 266–299 (AHADQTWDLAFSPDSTKLVSVSDDCSIHSYALKQ).

This sequence belongs to the SKI8 family.

This is Superkiller complex protein 8 (skic8) from Dictyostelium discoideum (Social amoeba).